Here is a 347-residue protein sequence, read N- to C-terminus: Ferrochelatase (347 aa).

Fe cation contacts are provided by His-193 and Glu-273.

The protein belongs to the ferrochelatase family.

It localises to the cytoplasm. It catalyses the reaction heme b + 2 H(+) = protoporphyrin IX + Fe(2+). The protein operates within porphyrin-containing compound metabolism; protoheme biosynthesis; protoheme from protoporphyrin-IX: step 1/1. In terms of biological role, catalyzes the ferrous insertion into protoporphyrin IX. This chain is Ferrochelatase, found in Rickettsia canadensis (strain McKiel).